The following is a 247-amino-acid chain: Caffeoyl-CoA O-methyltransferase (247 aa).

Residue Lys-21 coordinates substrate. S-adenosyl-L-methionine-binding positions include Thr-63, Glu-85, 87–88 (GV), Ser-93, Asp-111, and Ala-140. Residue Asp-163 coordinates substrate. Position 163 (Asp-163) interacts with a divalent metal cation. Asp-165 contacts S-adenosyl-L-methionine. A divalent metal cation contacts are provided by Asp-189 and Asn-190. Residue Asn-194 coordinates substrate.

Belongs to the class I-like SAM-binding methyltransferase superfamily. Cation-dependent O-methyltransferase family. CCoAMT subfamily. A divalent metal cation is required as a cofactor.

It catalyses the reaction (E)-caffeoyl-CoA + S-adenosyl-L-methionine = (E)-feruloyl-CoA + S-adenosyl-L-homocysteine + H(+). It participates in aromatic compound metabolism; phenylpropanoid biosynthesis. In terms of biological role, methylates caffeoyl-CoA to feruloyl-CoA and 5-hydroxyferuloyl-CoA to sinapoyl-CoA. Plays a role in the synthesis of feruloylated polysaccharides. Involved in the reinforcement of the plant cell wall. Also involved in the responding to wounding or pathogen challenge by the increased formation of cell wall-bound ferulic acid polymers. The polypeptide is Caffeoyl-CoA O-methyltransferase (Populus tremuloides (Quaking aspen)).